Here is a 186-residue protein sequence, read N- to C-terminus: Crossover junction endodeoxyribonuclease RuvC (186 aa).

Residues Asp-7, Glu-67, and Asp-140 contribute to the active site. Residues Asp-7, Glu-67, and Asp-140 each coordinate Mg(2+).

This sequence belongs to the RuvC family. In terms of assembly, homodimer which binds Holliday junction (HJ) DNA. The HJ becomes 2-fold symmetrical on binding to RuvC with unstacked arms; it has a different conformation from HJ DNA in complex with RuvA. In the full resolvosome a probable DNA-RuvA(4)-RuvB(12)-RuvC(2) complex forms which resolves the HJ. Mg(2+) is required as a cofactor.

It is found in the cytoplasm. It catalyses the reaction Endonucleolytic cleavage at a junction such as a reciprocal single-stranded crossover between two homologous DNA duplexes (Holliday junction).. Its function is as follows. The RuvA-RuvB-RuvC complex processes Holliday junction (HJ) DNA during genetic recombination and DNA repair. Endonuclease that resolves HJ intermediates. Cleaves cruciform DNA by making single-stranded nicks across the HJ at symmetrical positions within the homologous arms, yielding a 5'-phosphate and a 3'-hydroxyl group; requires a central core of homology in the junction. The consensus cleavage sequence is 5'-(A/T)TT(C/G)-3'. Cleavage occurs on the 3'-side of the TT dinucleotide at the point of strand exchange. HJ branch migration catalyzed by RuvA-RuvB allows RuvC to scan DNA until it finds its consensus sequence, where it cleaves and resolves the cruciform DNA. The protein is Crossover junction endodeoxyribonuclease RuvC of Chloroherpeton thalassium (strain ATCC 35110 / GB-78).